The primary structure comprises 569 residues: Arginine--tRNA ligase (569 aa).

The 'HIGH' region signature appears at Ala123–His133.

Belongs to the class-I aminoacyl-tRNA synthetase family.

It is found in the cytoplasm. It carries out the reaction tRNA(Arg) + L-arginine + ATP = L-arginyl-tRNA(Arg) + AMP + diphosphate. The protein is Arginine--tRNA ligase of Methanosarcina barkeri (strain Fusaro / DSM 804).